A 1624-amino-acid chain; its full sequence is MTIDPGAKQDVEAWTTFTASADIPDWISKAYIDSYRGPRDDSSEATKAAEASWLPASLLTPAMLGAHYRLGRHRAAGESCVAVYRADDPAGFGPALQVVAEHGGMLMDSVTVLLHRLGIAYAAILTPVFDVHRSPTGELLRIEPKAEGTSPHLGEAWMHVALSPAVDHKGLAEVERLLPKVLADVQRVATDATALIATLSELAGEVESNAGGRFSAPDRQDVGELLRWLGDGNFLLLGYQRCRVADGMVYGEGSSGMGVLRGRTGSRPRLTDDDKLLVLAQARVGSYLRYGAYPYAIAVREYVDGSVVEHRFVGLFSVAAMNADVLEIPTISRRVREALAMAESDPSHPGQLLLDVIQTVPRPELFTLSAQRLLTMARAVVDLGSQRQALLFLRADRLQYFVSCLVYMPRDRYTTAVRMQFEDILVREFGGTRLEFTARVSESPWALMHFMVRLPEVGVAGEGAAAPPVDVSEANRIRIQGLLTEAARTWADRLIGAAAAAGSVGQADAMHYAAAFSEAYKQAVTPADAIGDIAVITELTDDSVKLVFSERDEQGVAQLTWFLGGRTASLSQLLPMLQSMGVVVLEERPFSVTRPDGLPVWIYQFKISPHPTIPLAPTVAERAATAHRFAEAVTAIWHGRVEIDRFNELVMRAGLTWQQVVLLRAYAKYLRQAGFPYSQSYIESVLNEHPATVRSLVDLFEALFVPVPSGSASNRDAQAAAAAVAADIDALVSLDTDRILRAFASLVQATLRTNYFVTRQGSARCRDVLALKLNAQLIDELPLPRPRYEIFVYSPRVEGVHLRFGPVARGGLRWSDRRDDFRTEILGLVKAQAVKNAVIVPVGAKGGFVVKRPPLPTGDPAADRDATRAEGVACYQLFISGLLDVTDNVDHATASVNPPPEVVRRDGDDAYLVVAADKGTATFSDIANDVAKSYGFWLGDAFASGGSVGYDHKAMGITARGAWEAVKRHFREIGIDTQTQDFTVVGIGDMSGDVFGNGMLLSKHIRLIAAFDHRHIFLDPNPDAAVSWAERRRMFELPRSSWSDYDRSLISEGGGVYSREQKAIPLSAQVRAVLGIDGSVDGGAAEMAPPNLIRAILRAPVDLLFNGGIGTYIKAESESDADVGDRANDPVRVNANQVRAKVIGEGGNLGVTALGRVEFDLSGGRINTDALDNSAGVDCSDHEVNIKILIDSLVSAGTVKADERTQLLESMTDEVAQLVLADNEDQNDLMGTSRANAASLLPVHAMQIKYLVAERGVNRELEALPSEKEIARRSEAGIGLTSPELATLMAHVKLGLKEEVLATELPDQDVFASRLPRYFPTALRERFTPEIRSHQLRREIVTTMLINDLVDTAGITYAFRIAEDVGVTPIDAVRTYVATDAIFGVGHIWRRIRAANLPIALSDRLTLDTRRLIDRAGRWLLNYRPQPLAVGAEINRFAAMVKALTPRMSEWLRGDDKAIVEKTAAEFASQGVPEDLAYRVSTGLYRYSLLDIIDIADIADIDAAEVADTYFALMDRLGTDGLLTAVSQLPRHDRWHSLARLAIRDDIYGALRSLCFDVLAVGEPGESSEQKIAEWEHLSASRVARARRTLDDIRASGQKDLATLSVAARQIRRMTRTSGRGISG.

K845 is a catalytic residue.

It belongs to the Glu/Leu/Phe/Val dehydrogenases family. Interacts with (unphosphorylated) GarA.

It carries out the reaction L-glutamate + NAD(+) + H2O = 2-oxoglutarate + NH4(+) + NADH + H(+). Its activity is regulated as follows. Activity is inhibited by unphosphorylated GarA. Functionally, catalyzes the reversible conversion of L-glutamate to 2-oxoglutarate. This Mycobacterium tuberculosis (strain ATCC 25618 / H37Rv) protein is NAD-specific glutamate dehydrogenase (gdh).